A 228-amino-acid polypeptide reads, in one-letter code: MHSHSTLILEAHDIQKNFYHPVQVKILQSVSLQVQMGESVAIIGRSGEGKSTLLQILGTLEQPCSGTLTIDNQLISSSNKSQIRNELIGFVFQSFHLLEDYTALENVLMPARIGRKSVAKGSLTEQRGMELLHQVGLQERAHFHTKLLSGGEKQRIALARAMCNDPKIIFADEPSGNLDRQTAHLMHEILLKFIHGQQKALVLVTHDPELAKLCSSQYELINGCLYRR.

Residues 9 to 228 (LEAHDIQKNF…ELINGCLYRR (220 aa)) enclose the ABC transporter domain. An ATP-binding site is contributed by 44 to 51 (GRSGEGKS).

Belongs to the ABC transporter superfamily. Lipoprotein translocase (TC 3.A.1.125) family. The complex is composed of two ATP-binding proteins (LolD) and two transmembrane proteins (LolC and LolE).

The protein resides in the cell inner membrane. Its function is as follows. Part of the ABC transporter complex LolCDE involved in the translocation of mature outer membrane-directed lipoproteins, from the inner membrane to the periplasmic chaperone, LolA. Responsible for the formation of the LolA-lipoprotein complex in an ATP-dependent manner. This Protochlamydia amoebophila (strain UWE25) protein is Lipoprotein-releasing system ATP-binding protein LolD.